Here is a 523-residue protein sequence, read N- to C-terminus: Sorting nexin-2 (523 aa).

Residues 1-104 (MAAEREPPPL…EPSPAVTPVT (104 aa)) form a disordered region. Low complexity-rich tracts occupy residues 27–50 (LFTS…LPAE) and 93–104 (SSEPSPAVTPVT). Residue Ser97 is modified to Phosphoserine. Thr101 and Thr104 each carry phosphothreonine. Phosphoserine occurs at positions 117 and 119. The 130-residue stretch at 140–269 (FDIEIGVSDP…QFLESSELPR (130 aa)) folds into the PX domain. A 1,2-diacyl-sn-glycero-3-phospho-(1D-myo-inositol-3-phosphate)-binding residues include Arg183, Ser185, Lys211, and Arg235. Position 185 is a phosphoserine (Ser185). The segment at 260-523 (QFLESSELPR…AFLPEAKAIA (264 aa)) is interaction with RhoG. Ser277 carries the post-translational modification Phosphoserine. The segment at 278-295 (GAGILRMVNKAADAVNKM) is membrane-binding amphipathic helix. A BAR domain is found at 299 to 523 (MNESDAWFEE…AFLPEAKAIA (225 aa)). The residue at position 473 (Lys473) is an N6-acetyllysine.

This sequence belongs to the sorting nexin family. As to quaternary structure, predominantly forms heterodimers with BAR domain-containing sorting nexins SNX5, SNX6 and SNX32; can self-associate to form homodimers. The heterodimers are proposed to self-assemble into helical arrays on the membrane to stabilize and expand local membrane curvature underlying endosomal tubule formation. Thought to be a component of the originally described retromer complex (also called SNX-BAR retromer) which is a pentamer containing the heterotrimeric retromer cargo-selective complex (CSC), also described as vacuolar protein sorting subcomplex (VPS), and a heterodimeric membrane-deforming subcomplex formed between SNX1 or SNX2 and SNX5 or SNX6 (also called SNX-BAR subcomplex); the respective CSC and SNX-BAR subcomplexes associate with low affinity. Interacts with SNX5, SNX6, SNX32, VPS26A, VPS29, VPS35, FNBP1, KALRN, RHOG (GDP-bound form).

It is found in the early endosome membrane. The protein resides in the cell projection. The protein localises to the lamellipodium. Functionally, involved in several stages of intracellular trafficking. Interacts with membranes containing phosphatidylinositol 3-phosphate (PtdIns(3P)) or phosphatidylinositol 3,5-bisphosphate (PtdIns(3,5)P2). Acts in part as component of the retromer membrane-deforming SNX-BAR subcomplex. The SNX-BAR retromer mediates retrograde transport of cargo proteins from endosomes to the trans-Golgi network (TGN) and is involved in endosome-to-plasma membrane transport for cargo protein recycling. The SNX-BAR subcomplex functions to deform the donor membrane into a tubular profile called endosome-to-TGN transport carrier (ETC). Can sense membrane curvature and has in vitro vesicle-to-membrane remodeling activity. Required for retrograde endosome-to-TGN transport of TGN38. Promotes KALRN- and RHOG-dependent but retromer-independent membrane remodeling such as lamellipodium formation; the function is dependent on GEF activity of KALRN. In Macaca fascicularis (Crab-eating macaque), this protein is Sorting nexin-2 (SNX2).